Consider the following 283-residue polypeptide: Bifunctional protein FolD (283 aa).

NADP(+)-binding positions include 164-166 and S189; that span reads GRS.

It belongs to the tetrahydrofolate dehydrogenase/cyclohydrolase family. Homodimer.

It carries out the reaction (6R)-5,10-methylene-5,6,7,8-tetrahydrofolate + NADP(+) = (6R)-5,10-methenyltetrahydrofolate + NADPH. The enzyme catalyses (6R)-5,10-methenyltetrahydrofolate + H2O = (6R)-10-formyltetrahydrofolate + H(+). It participates in one-carbon metabolism; tetrahydrofolate interconversion. Catalyzes the oxidation of 5,10-methylenetetrahydrofolate to 5,10-methenyltetrahydrofolate and then the hydrolysis of 5,10-methenyltetrahydrofolate to 10-formyltetrahydrofolate. The protein is Bifunctional protein FolD of Lactobacillus acidophilus (strain ATCC 700396 / NCK56 / N2 / NCFM).